The primary structure comprises 333 residues: Glycerol-3-phosphate dehydrogenase [NAD(P)+] (333 aa).

NADPH contacts are provided by Tyr14, His34, and Lys108. 3 residues coordinate sn-glycerol 3-phosphate: Lys108, Gly137, and Thr139. Ala141 provides a ligand contact to NADPH. 5 residues coordinate sn-glycerol 3-phosphate: Lys193, Asp247, Ser257, Arg258, and Asn259. The Proton acceptor role is filled by Lys193. Arg258 is an NADPH binding site. 2 residues coordinate NADPH: Leu282 and Glu284.

Belongs to the NAD-dependent glycerol-3-phosphate dehydrogenase family.

Its subcellular location is the cytoplasm. The enzyme catalyses sn-glycerol 3-phosphate + NAD(+) = dihydroxyacetone phosphate + NADH + H(+). It carries out the reaction sn-glycerol 3-phosphate + NADP(+) = dihydroxyacetone phosphate + NADPH + H(+). Its pathway is membrane lipid metabolism; glycerophospholipid metabolism. Functionally, catalyzes the reduction of the glycolytic intermediate dihydroxyacetone phosphate (DHAP) to sn-glycerol 3-phosphate (G3P), the key precursor for phospholipid synthesis. The protein is Glycerol-3-phosphate dehydrogenase [NAD(P)+] of Blochmanniella floridana.